Consider the following 664-residue polypeptide: Transketolase 1 (664 aa).

Residue H26 coordinates substrate. Residues H66 and 114–116 (GPL) contribute to the thiamine diphosphate site. D155 lines the Mg(2+) pocket. Thiamine diphosphate contacts are provided by G156 and N185. Residues N185 and I187 each coordinate Mg(2+). Substrate-binding residues include H260, R357, and S384. Position 260 (H260) interacts with thiamine diphosphate. E411 acts as the Proton donor in catalysis. F437 is a binding site for thiamine diphosphate. Substrate is bound by residues H461, D469, and R520.

This sequence belongs to the transketolase family. As to quaternary structure, homodimer. The cofactor is Mg(2+). Ca(2+) serves as cofactor. Mn(2+) is required as a cofactor. It depends on Co(2+) as a cofactor. Requires thiamine diphosphate as cofactor.

It carries out the reaction D-sedoheptulose 7-phosphate + D-glyceraldehyde 3-phosphate = aldehydo-D-ribose 5-phosphate + D-xylulose 5-phosphate. Catalyzes the transfer of a two-carbon ketol group from a ketose donor to an aldose acceptor, via a covalent intermediate with the cofactor thiamine pyrophosphate. The chain is Transketolase 1 (tkt1) from Vibrio parahaemolyticus serotype O3:K6 (strain RIMD 2210633).